Consider the following 156-residue polypeptide: Succinate dehydrogenase assembly factor 2-B, mitochondrial (156 aa).

The transit peptide at 1 to 12 directs the protein to the mitochondrion; the sequence is MLRQILSSAVAK.

Belongs to the SDHAF2 family. Interacts with the flavoprotein subunit within the SDH catalytic dimer.

The protein localises to the mitochondrion matrix. Plays an essential role in the assembly of succinate dehydrogenase (SDH), an enzyme complex (also referred to as respiratory complex II) that is a component of both the tricarboxylic acid (TCA) cycle and the mitochondrial electron transport chain, and which couples the oxidation of succinate to fumarate with the reduction of ubiquinone (coenzyme Q) to ubiquinol. Required for flavinylation (covalent attachment of FAD) of the flavoprotein subunit of the SDH catalytic dimer. The chain is Succinate dehydrogenase assembly factor 2-B, mitochondrial from Drosophila willistoni (Fruit fly).